The sequence spans 194 residues: Granulocyte colony-stimulating factor (194 aa).

Positions 1-20 (KLMALQLLLWHSALWMVQEA) are cleaved as a signal peptide. Intrachain disulfides connect C56–C62 and C84–C94. O-linked (GalNAc...) threonine glycosylation is present at T153.

Belongs to the IL-6 superfamily. As to quaternary structure, monomer. O-glycosylated.

The protein localises to the secreted. In terms of biological role, granulocyte/macrophage colony-stimulating factors are cytokines that act in hematopoiesis by controlling the production, differentiation, and function of 2 related white cell populations of the blood, the granulocytes and the monocytes-macrophages. This CSF induces granulocytes. The chain is Granulocyte colony-stimulating factor (CSF3) from Felis catus (Cat).